The primary structure comprises 89 residues: Small ribosomal subunit protein uS15 (89 aa).

The protein belongs to the universal ribosomal protein uS15 family. Part of the 30S ribosomal subunit. Forms a bridge to the 50S subunit in the 70S ribosome, contacting the 23S rRNA.

One of the primary rRNA binding proteins, it binds directly to 16S rRNA where it helps nucleate assembly of the platform of the 30S subunit by binding and bridging several RNA helices of the 16S rRNA. In terms of biological role, forms an intersubunit bridge (bridge B4) with the 23S rRNA of the 50S subunit in the ribosome. The polypeptide is Small ribosomal subunit protein uS15 (Marinomonas sp. (strain MWYL1)).